Consider the following 250-residue polypeptide: 2,3-bisphosphoglycerate-dependent phosphoglycerate mutase (250 aa).

Substrate-binding positions include 10 to 17 (RHGESQWN), 23 to 24 (TG), Arg62, 89 to 92 (ERHY), Lys100, 116 to 117 (RR), and 185 to 186 (GN). His11 functions as the Tele-phosphohistidine intermediate in the catalytic mechanism. The active-site Proton donor/acceptor is the Glu89.

Belongs to the phosphoglycerate mutase family. BPG-dependent PGAM subfamily. In terms of assembly, homodimer.

The catalysed reaction is (2R)-2-phosphoglycerate = (2R)-3-phosphoglycerate. It functions in the pathway carbohydrate degradation; glycolysis; pyruvate from D-glyceraldehyde 3-phosphate: step 3/5. Its function is as follows. Catalyzes the interconversion of 2-phosphoglycerate and 3-phosphoglycerate. The sequence is that of 2,3-bisphosphoglycerate-dependent phosphoglycerate mutase from Salmonella choleraesuis (strain SC-B67).